Here is a 415-residue protein sequence, read N- to C-terminus: Esterase FrsA (415 aa).

Residues M1–L23 are disordered.

This sequence belongs to the FrsA family.

It carries out the reaction a carboxylic ester + H2O = an alcohol + a carboxylate + H(+). Its function is as follows. Catalyzes the hydrolysis of esters. This Photorhabdus laumondii subsp. laumondii (strain DSM 15139 / CIP 105565 / TT01) (Photorhabdus luminescens subsp. laumondii) protein is Esterase FrsA.